A 140-amino-acid chain; its full sequence is Large ribosomal subunit protein uL14 (140 aa).

At Ser-17 the chain carries Phosphoserine. Residue Tyr-38 is modified to Phosphotyrosine.

It belongs to the universal ribosomal protein uL14 family. In terms of assembly, component of the large ribosomal subunit.

It is found in the cytoplasm. Component of the large ribosomal subunit. The ribosome is a large ribonucleoprotein complex responsible for the synthesis of proteins in the cell. This Pongo abelii (Sumatran orangutan) protein is Large ribosomal subunit protein uL14 (RPL23).